The primary structure comprises 205 residues: Heat shock protein beta-11 (205 aa).

The 114-residue stretch at 67 to 180 (VSPMTTFKPI…NERVIPITYT (114 aa)) folds into the sHSP domain. The tract at residues 184–205 (KNPALQNSEPENQAVEAEAAEN) is disordered. Over residues 192 to 205 (EPENQAVEAEAAEN) the composition is skewed to low complexity.

This sequence belongs to the small heat shock protein (HSP20) family. As to expression, expressed specifically in the rostral-most somites at 24 hpf. At 48 hpf, expression continues in the rostral-most somites and also in the notochord. Somite expression was restricted to the vicinity of the horizontal myoseptum. In adults, expressed in the heart.

The chain is Heat shock protein beta-11 (hspb11) from Danio rerio (Zebrafish).